The primary structure comprises 436 residues: Adenylosuccinate synthetase (436 aa).

GTP-binding positions include 12–18 (GDEGKGK) and 40–42 (GHT). The Proton acceptor role is filled by Asp-13. Positions 13 and 40 each coordinate Mg(2+). Residues 13–16 (DEGK), 38–41 (NAGH), Thr-130, Arg-144, Gln-230, Thr-245, and Arg-309 contribute to the IMP site. His-41 (proton donor) is an active-site residue. A substrate-binding site is contributed by 305–311 (TTTGRPR). Residues Arg-311, 337–339 (KLD), and 419–421 (SVG) each bind GTP.

It belongs to the adenylosuccinate synthetase family. In terms of assembly, homodimer. It depends on Mg(2+) as a cofactor.

It localises to the cytoplasm. The enzyme catalyses IMP + L-aspartate + GTP = N(6)-(1,2-dicarboxyethyl)-AMP + GDP + phosphate + 2 H(+). The protein operates within purine metabolism; AMP biosynthesis via de novo pathway; AMP from IMP: step 1/2. Functionally, plays an important role in the de novo pathway of purine nucleotide biosynthesis. Catalyzes the first committed step in the biosynthesis of AMP from IMP. This is Adenylosuccinate synthetase from Myxococcus xanthus (strain DK1622).